Reading from the N-terminus, the 313-residue chain is Aspartate carbamoyltransferase catalytic subunit (313 aa).

Residues R58 and T59 each coordinate carbamoyl phosphate. K86 contributes to the L-aspartate binding site. 3 residues coordinate carbamoyl phosphate: R108, H136, and Q139. 2 residues coordinate L-aspartate: R169 and R223. G264 and P265 together coordinate carbamoyl phosphate.

It belongs to the aspartate/ornithine carbamoyltransferase superfamily. ATCase family. As to quaternary structure, heterododecamer (2C3:3R2) of six catalytic PyrB chains organized as two trimers (C3), and six regulatory PyrI chains organized as three dimers (R2).

It catalyses the reaction carbamoyl phosphate + L-aspartate = N-carbamoyl-L-aspartate + phosphate + H(+). Its pathway is pyrimidine metabolism; UMP biosynthesis via de novo pathway; (S)-dihydroorotate from bicarbonate: step 2/3. Its function is as follows. Catalyzes the condensation of carbamoyl phosphate and aspartate to form carbamoyl aspartate and inorganic phosphate, the committed step in the de novo pyrimidine nucleotide biosynthesis pathway. The polypeptide is Aspartate carbamoyltransferase catalytic subunit (Chlorobium luteolum (strain DSM 273 / BCRC 81028 / 2530) (Pelodictyon luteolum)).